Reading from the N-terminus, the 59-residue chain is Photosystem II reaction center protein K (59 aa).

The propeptide occupies 1 to 22; that stretch reads MLNIFSLICLNSALYPSSLFFA. The helical transmembrane segment at 38–58 threads the bilayer; the sequence is MPVIPLFFFLLAFVWQAAVSF.

It belongs to the PsbK family. PSII is composed of 1 copy each of membrane proteins PsbA, PsbB, PsbC, PsbD, PsbE, PsbF, PsbH, PsbI, PsbJ, PsbK, PsbL, PsbM, PsbT, PsbX, PsbY, PsbZ, Psb30/Ycf12, at least 3 peripheral proteins of the oxygen-evolving complex and a large number of cofactors. It forms dimeric complexes.

Its subcellular location is the plastid. It is found in the chloroplast thylakoid membrane. Functionally, one of the components of the core complex of photosystem II (PSII). PSII is a light-driven water:plastoquinone oxidoreductase that uses light energy to abstract electrons from H(2)O, generating O(2) and a proton gradient subsequently used for ATP formation. It consists of a core antenna complex that captures photons, and an electron transfer chain that converts photonic excitation into a charge separation. This chain is Photosystem II reaction center protein K, found in Lactuca sativa (Garden lettuce).